We begin with the raw amino-acid sequence, 853 residues long: Thrombospondin type-1 domain-containing protein 1 (853 aa).

The first 24 residues, Met-1–Ala-24, serve as a signal peptide directing secretion. The Extracellular segment spans residues Glu-25–Asn-414. Asn-39, Asn-53, Asn-58, Asn-69, Asn-80, Asn-135, and Asn-304 each carry an N-linked (GlcNAc...) asparagine glycan. The region spanning Ile-341–Ala-394 is the TSP type-1 domain. 3 disulfides stabilise this stretch: Cys-353–Cys-388, Cys-357–Cys-393, and Cys-368–Cys-378. A helical transmembrane segment spans residues Ile-415–Thr-435. Residues Leu-436 to Ile-853 lie on the Cytoplasmic side of the membrane. 4 disordered regions span residues Lys-445 to Gln-518, Thr-624 to His-650, Glu-668 to Gly-702, and Gln-714 to Lys-800. Ser-464 is modified (phosphoserine). The segment covering Met-671–Thr-686 has biased composition (polar residues). Residues Arg-687 to Arg-697 show a composition bias toward basic and acidic residues. Residues Ser-767–Gln-795 show a composition bias toward polar residues.

In terms of assembly, part of a complex composed of THSD1, PTK2/FAK1, TLN1 and VCL. Interacts with TLN1.

Its subcellular location is the endosome membrane. The protein resides in the cell junction. The protein localises to the focal adhesion. Its function is as follows. Is a positive regulator of nascent focal adhesion assembly, involved in the modulation of endothelial cell attachment to the extracellular matrix. The sequence is that of Thrombospondin type-1 domain-containing protein 1 (THSD1) from Pongo abelii (Sumatran orangutan).